The following is a 155-amino-acid chain: SsrA-binding protein (155 aa).

The protein belongs to the SmpB family.

Its subcellular location is the cytoplasm. Functionally, required for rescue of stalled ribosomes mediated by trans-translation. Binds to transfer-messenger RNA (tmRNA), required for stable association of tmRNA with ribosomes. tmRNA and SmpB together mimic tRNA shape, replacing the anticodon stem-loop with SmpB. tmRNA is encoded by the ssrA gene; the 2 termini fold to resemble tRNA(Ala) and it encodes a 'tag peptide', a short internal open reading frame. During trans-translation Ala-aminoacylated tmRNA acts like a tRNA, entering the A-site of stalled ribosomes, displacing the stalled mRNA. The ribosome then switches to translate the ORF on the tmRNA; the nascent peptide is terminated with the 'tag peptide' encoded by the tmRNA and targeted for degradation. The ribosome is freed to recommence translation, which seems to be the essential function of trans-translation. The chain is SsrA-binding protein from Streptococcus pneumoniae (strain Hungary19A-6).